Here is a 371-residue protein sequence, read N- to C-terminus: MGEGDAFWAPSVLPHSTLSTLSHHPQPQFGRRMESKVSEGGLNVTLTIRLLMHGKEVGSIIGKKGETVKKMREESGARINISEGNCPERIVTITGPTDAIFKAFAMIAYKFEEDIINSMSNSPATSKPPVTLRLVVPASQCGSLIGKGGSKIKEIRESTGAQVQVAGDMLPNSTERAVTISGTPDAIIQCVKQICVVMLESPPKGATIPYRPKPASTPVIFAGGQAYTIQGQYAIPHPDQLTKLHQLAMQQTPFPPLGQTNPAFPGEKLPLHSSEEAQNLMGQSSGLDASPPASTHELTIPNDLIGCIIGRQGTKINEIRQMSGAQIKIANATEGSSERQITITGTPANISLAQYLINARLTSEVTGMGTL.

3 KH domains span residues 45-95 (TLTI…TITG), 129-182 (PVTL…TISG), and 293-357 (ASTH…QYLI).

Its subcellular location is the cytoplasm. Functionally, single-stranded nucleic acid binding protein that binds preferentially to oligo dC. In Homo sapiens (Human), this protein is Poly(rC)-binding protein 3.